The sequence spans 212 residues: Holliday junction branch migration complex subunit RuvA (212 aa).

The domain I stretch occupies residues 1–70 (MISYLKGSPI…EDQQILYGFS (70 aa)). A domain II region spans residues 71–149 (TTAERELFRQ…QWRKMVGVTV (79 aa)). The tract at residues 150-160 (TSSAAMPSLEI) is flexible linker. Positions 160–212 (ILEDIEMTLLALGYTNEEINKAISTLSQDNLMLKNTNTEEWIKEAIAWLSQGT) are domain III.

This sequence belongs to the RuvA family. In terms of assembly, homotetramer. Forms an RuvA(8)-RuvB(12)-Holliday junction (HJ) complex. HJ DNA is sandwiched between 2 RuvA tetramers; dsDNA enters through RuvA and exits via RuvB. An RuvB hexamer assembles on each DNA strand where it exits the tetramer. Each RuvB hexamer is contacted by two RuvA subunits (via domain III) on 2 adjacent RuvB subunits; this complex drives branch migration. In the full resolvosome a probable DNA-RuvA(4)-RuvB(12)-RuvC(2) complex forms which resolves the HJ.

Its subcellular location is the cytoplasm. Functionally, the RuvA-RuvB-RuvC complex processes Holliday junction (HJ) DNA during genetic recombination and DNA repair, while the RuvA-RuvB complex plays an important role in the rescue of blocked DNA replication forks via replication fork reversal (RFR). RuvA specifically binds to HJ cruciform DNA, conferring on it an open structure. The RuvB hexamer acts as an ATP-dependent pump, pulling dsDNA into and through the RuvAB complex. HJ branch migration allows RuvC to scan DNA until it finds its consensus sequence, where it cleaves and resolves the cruciform DNA. This is Holliday junction branch migration complex subunit RuvA from Crocosphaera subtropica (strain ATCC 51142 / BH68) (Cyanothece sp. (strain ATCC 51142)).